We begin with the raw amino-acid sequence, 741 residues long: Phosphoribosylformylglycinamidine synthase subunit PurL (741 aa).

Residue H53 is part of the active site. ATP is bound by residues Y56 and K95. Position 97 (E97) interacts with Mg(2+). Substrate-binding positions include 98 to 101 (SHNH) and R120. H99 serves as the catalytic Proton acceptor. Position 121 (D121) interacts with Mg(2+). Substrate is bound at residue Q244. D274 lines the Mg(2+) pocket. 318 to 320 (ESQ) lines the substrate pocket. ATP-binding residues include D501 and G538. N539 lines the Mg(2+) pocket. S541 contacts substrate.

This sequence belongs to the FGAMS family. As to quaternary structure, monomer. Part of the FGAM synthase complex composed of 1 PurL, 1 PurQ and 2 PurS subunits.

Its subcellular location is the cytoplasm. The enzyme catalyses N(2)-formyl-N(1)-(5-phospho-beta-D-ribosyl)glycinamide + L-glutamine + ATP + H2O = 2-formamido-N(1)-(5-O-phospho-beta-D-ribosyl)acetamidine + L-glutamate + ADP + phosphate + H(+). Its pathway is purine metabolism; IMP biosynthesis via de novo pathway; 5-amino-1-(5-phospho-D-ribosyl)imidazole from N(2)-formyl-N(1)-(5-phospho-D-ribosyl)glycinamide: step 1/2. Part of the phosphoribosylformylglycinamidine synthase complex involved in the purines biosynthetic pathway. Catalyzes the ATP-dependent conversion of formylglycinamide ribonucleotide (FGAR) and glutamine to yield formylglycinamidine ribonucleotide (FGAM) and glutamate. The FGAM synthase complex is composed of three subunits. PurQ produces an ammonia molecule by converting glutamine to glutamate. PurL transfers the ammonia molecule to FGAR to form FGAM in an ATP-dependent manner. PurS interacts with PurQ and PurL and is thought to assist in the transfer of the ammonia molecule from PurQ to PurL. The polypeptide is Phosphoribosylformylglycinamidine synthase subunit PurL (Ligilactobacillus salivarius (strain UCC118) (Lactobacillus salivarius)).